We begin with the raw amino-acid sequence, 439 residues long: MSANWKTTGKTTGELSFEISQDEIKKSLDKAFGRVKKSLRVPGFRKGHVSRVIFNQYYGEEALYEDALNFALPEAYSAAVKETGIKAVGQPQIVPVSMGKNKAWEMKAIVTVEPEVELGQYTEIEVPKQNTRVYQKDIDAELTKRQEQNAEMVLKNDKAENGDTVTIDYVGTVDGVEFDGGSAQNYSLELGSNTFIPGFEDQLVGHGAGEEVDVVVTFPEDYGAKDLAGKEAHFATKIHEVKAKQLPELDDEFAKDVDDSVETLDELKEKIKAELKSEKEEAAKAAIQEAAITTAVKNATVEEIPDVMIQEDVDNQLNQYLGDMQRQGIDPQTYFKLTNTTEDQLRSQLSANAAERVKTNLVLEAIVAKEGFEASKEEIDAEIKDLADNYNMSEKAVRNALSDEMLAHDINVRKAMDLITDSAKQVAKAKLEEGSEEDK.

The PPIase FKBP-type domain maps to 162-247 (GDTVTIDYVG…IHEVKAKQLP (86 aa)).

The protein belongs to the FKBP-type PPIase family. Tig subfamily.

It localises to the cytoplasm. It catalyses the reaction [protein]-peptidylproline (omega=180) = [protein]-peptidylproline (omega=0). Functionally, involved in protein export. Acts as a chaperone by maintaining the newly synthesized protein in an open conformation. Functions as a peptidyl-prolyl cis-trans isomerase. The protein is Trigger factor of Lactobacillus delbrueckii subsp. bulgaricus (strain ATCC 11842 / DSM 20081 / BCRC 10696 / JCM 1002 / NBRC 13953 / NCIMB 11778 / NCTC 12712 / WDCM 00102 / Lb 14).